The primary structure comprises 54 residues: Hemoglobin subunit omega (54 aa).

The 53-residue stretch at 2–54 (HWTAEEKQIILAIWAKIDIEEAGAAALSRLLVVYPWTQRYFKNFGNLSSPTAI) folds into the Globin domain.

The protein belongs to the globin family.

Hemoglobin omega chain is an embryonic-type beta-type chain found in prenatal and neonatal marsupials. This Notamacropus eugenii (Tammar wallaby) protein is Hemoglobin subunit omega.